Consider the following 560-residue polypeptide: Exonuclease subunit 2 (560 aa).

36–43 contacts ATP; sequence GRNGGGKS.

The protein to phage T5 protein D13 and to yeast RAD52. Consists of two subunits: gp46 and gp47.

Exonuclease that plays a role in viral genome replication, DNA recombination, and host DNA degradation. The polypeptide is Exonuclease subunit 2 (46) (Enterobacteria phage T4 (Bacteriophage T4)).